Reading from the N-terminus, the 190-residue chain is Scytalone dehydratase-like protein Arp1 (190 aa).

Y67 provides a ligand contact to substrate. Catalysis depends on residues H102 and H127. N148 lines the substrate pocket.

It belongs to the scytalone dehydratase family. As to quaternary structure, homotrimer. Each subunit contains an active site, located in the central part of the hydrophobic core of the monomer, which functions independently.

Its function is as follows. Scytalone dehydratase-like protein; part of the Pks2 gene cluster that mediates the formation of infectious structures (appressoria), enabling these fungi to kill insects faster. The product of the Pks2 gene cluster is different from the one of Pks1 and has still not been identified. The polypeptide is Scytalone dehydratase-like protein Arp1 (Metarhizium anisopliae (strain ARSEF 549)).